Consider the following 256-residue polypeptide: Ribonuclease 3 (256 aa).

The RNase III domain maps to leucine 3–glycine 125. Glutamate 38 contacts Mg(2+). Aspartate 42 is an active-site residue. The Mg(2+) site is built by aspartate 111 and glutamate 114. Glutamate 114 is a catalytic residue. Residues aspartate 152–arginine 222 form the DRBM domain. A disordered region spans residues glutamine 226–glutamate 256.

Belongs to the ribonuclease III family. As to quaternary structure, homodimer. Requires Mg(2+) as cofactor.

Its subcellular location is the cytoplasm. The enzyme catalyses Endonucleolytic cleavage to 5'-phosphomonoester.. Functionally, digests double-stranded RNA. Involved in the processing of primary rRNA transcript to yield the immediate precursors to the large and small rRNAs (23S and 16S). Processes some mRNAs, and tRNAs when they are encoded in the rRNA operon. Processes pre-crRNA and tracrRNA of type II CRISPR loci if present in the organism. The chain is Ribonuclease 3 from Ralstonia pickettii (strain 12J).